The primary structure comprises 288 residues: ATP synthase gamma chain (288 aa).

This sequence belongs to the ATPase gamma chain family. In terms of assembly, F-type ATPases have 2 components, CF(1) - the catalytic core - and CF(0) - the membrane proton channel. CF(1) has five subunits: alpha(3), beta(3), gamma(1), delta(1), epsilon(1). CF(0) has three main subunits: a, b and c.

Its subcellular location is the cell inner membrane. Produces ATP from ADP in the presence of a proton gradient across the membrane. The gamma chain is believed to be important in regulating ATPase activity and the flow of protons through the CF(0) complex. The sequence is that of ATP synthase gamma chain from Rickettsia canadensis (strain McKiel).